A 424-amino-acid polypeptide reads, in one-letter code: Solute carrier family 67 member A1 (424 aa).

Helical transmembrane passes span 26-46, 59-79, 90-110, 156-176, 184-204, 243-263, 276-296, 312-332, 334-354, and 391-411; these read ILLTYVLAATELTCLFMQFSI, IAFGYLQTTFGVLQLLGGPVF, AALTLSFLAALALYLLLAAAS, LGLCFGVGVILGSLLGGTLVS, AILAALATLLGAVLSFTCIPA, IFLVKVASNCPTGLFMVMFSI, AGYLMSFFGLLQMVTQGLVIG, VLVFIVVGLAMAWMSSVFHFC, LVPGLVFSLCTLNVVTDSMLI, and FGVPVFGHVQVAINTLVLLVL.

This sequence belongs to the major facilitator (TC 2.A.1) superfamily. Organic cation transporter (TC 2.A.1.19) family. Interacts with RNF167. In terms of tissue distribution, expressed at high levels in adult and fetal kidney and liver, and adult colon. Expressed in fetal renal proximal tubules (at protein level). Expressed at lower levels in heart, brain and lung.

The protein localises to the apical cell membrane. May act as a transporter of organic cations based on a proton efflux antiport mechanism. May play a role in the transport of chloroquine and quinidine-related compounds in kidney. Plays a role in the regulation of lipid metabolism. The polypeptide is Solute carrier family 67 member A1 (Homo sapiens (Human)).